A 262-amino-acid chain; its full sequence is MALLELERISAQYPGAETPVLADINLSLGPRQLLVALGPSGSGKTSLLNLIAGFVAPSGGRITLDGVPVQGPGAERGVVFQDDALLPWQNVLGNVAFGLELAGVPRAEREAKAREMLALVDLDGFGERRIWQLSGGQKQRVGLARALAADPRVLLMDEPFGALDAFTREQMQELLLQVWQRTAKPVFLITHDIEEAVFLASELVLLAPNPGRVVERLQLDFGQRYAAGESARAIKSDPAFIETREHVLARVFSQRQSLQERA.

Positions L4–A233 constitute an ABC transporter domain. G38–T45 contributes to the ATP binding site.

The protein belongs to the ABC transporter superfamily. Taurine importer (TC 3.A.1.17.1) family. As to quaternary structure, the complex is composed of two ATP-binding proteins (TauB), two transmembrane proteins (TauC) and a solute-binding protein (TauA).

The protein localises to the cell inner membrane. The enzyme catalyses taurine(out) + ATP + H2O = taurine(in) + ADP + phosphate + H(+). Part of the ABC transporter complex TauABC involved in taurine import. Responsible for energy coupling to the transport system. This chain is Taurine import ATP-binding protein TauB, found in Pseudomonas putida (Arthrobacter siderocapsulatus).